Reading from the N-terminus, the 68-residue chain is Non-specific lipid-transfer protein 2 (68 aa).

It belongs to the plant LTP family.

Plant non-specific lipid-transfer proteins transfer phospholipids as well as galactolipids across membranes. May play a role in wax or cutin deposition in the cell walls of expanding epidermal cells and certain secretory tissues. This is Non-specific lipid-transfer protein 2 from Prunus armeniaca (Apricot).